An 814-amino-acid polypeptide reads, in one-letter code: MKTKIPDAVLAAEVSRRGLVKTTAIGGLAMASSALTLPFSRIAHAVDSAIPTKSDEKVIWSACTVNCGSRCPLRMHVVDGEIKYVETDNTGDDNYDGLHQVRACLRGRSMRRRVYNPDRLKYPMKRVGARGEGKFERISWEEAYDIIATNMQRLIKEYGNESIYLNYGTGTLGGTMTRSWPPGNTLVARLMNCCGGYLNHYGDYSSAQIAEGLNYTYGGWADGNSPSDIENSKLVVLFGNNPGETRMSGGGVTYYLEQARQKSNARMIIIDPRYTDTGAGREDEWIPIRPGTDAALVNGLAYVMITENLVDQAFLDKYCVGYDEKTLPASAPKNGHYKAYILGEGPDGVAKTPEWASQITGVPADKIIKLAREIGSTKPAFISQGWGPQRHANGEIATRAISMLAILTGNVGINGGNSGAREGSYSLPFVRMPTLENPIQTSISMFMWTDAIERGPEMTALRDGVRGKDKLDVPIKMIWNYAGNCLINQHSEINRTHEILQDDKKCELIVVIDCHMTSSAKYADILLPDCTASEQMDFALDASCGNMSYVIFNDQVIKPRFECKTIYEMTSELAKRLGVEQQFTEGRTQEEWMRHLYAQSREAIPELPTFEEFRKQGIFKKRDPQGHHVAYKAFREDPQANPLTTPSGKIEIYSQALADIAATWELPEGDVIDPLPIYTPGFESYQDPLNKQYPLQLTGFHYKSRVHSTYGNVDVLKAACRQEMWINPLDAQKRGIHNGDKVRIFNDRGEVHIEAKVTPRMMPGVVALGEGAWYDPDAKRVDKGGCINVLTTQRPSPLAKGNPSHTNLVQVEKV.

Positions 1–45 form a signal peptide, tat-type signal; the sequence is MKTKIPDAVLAAEVSRRGLVKTTAIGGLAMASSALTLPFSRIAHA. The 4Fe-4S Mo/W bis-MGD-type domain occupies 56 to 118; it reads EKVIWSACTV…SMRRRVYNPD (63 aa). Positions 63, 67, 71, and 104 each coordinate [4Fe-4S] cluster. Mo-bis(molybdopterin guanine dinucleotide) contacts are provided by residues 172 to 176, Ser-205, 244 to 245, 270 to 271, 291 to 293, 386 to 387, Arg-390, Asn-488, 512 to 513, His-701, 707 to 709, Asn-788, and 804 to 805; these read LGGTM, ET, ID, GTD, WG, HST, and SH.

Belongs to the prokaryotic molybdopterin-containing oxidoreductase family. In terms of assembly, heterotrimeric enzyme composed of a catalytic heterodimer (DmsAB) and a membrane anchor protein (DmsC). It depends on [4Fe-4S] cluster as a cofactor. Mo-bis(molybdopterin guanine dinucleotide) is required as a cofactor. Post-translationally, exported by the Tat system. The position of the signal peptide cleavage has been experimentally proven. Can also be exported by the Sec system.

Its subcellular location is the cell membrane. It catalyses the reaction dimethyl sulfide + a menaquinone + H2O = dimethyl sulfoxide + a menaquinol. Inhibited by dithionite, sodium hydrogensulfite and tungstate. Its function is as follows. Catalyzes the reduction of dimethyl sulfoxide (DMSO) to dimethyl sulfide (DMS). DMSO reductase serves as the terminal reductase under anaerobic conditions, with DMSO being the terminal electron acceptor. Terminal reductase during anaerobic growth on various sulfoxides and N-oxide compounds. Allows E.coli to grow anaerobically on DMSO as respiratory oxidant. This Escherichia coli (strain K12) protein is Dimethyl sulfoxide reductase DmsA (dmsA).